The primary structure comprises 187 residues: MRLVLLGPPGSGKGTQAAQMKETLQIPHISTGDLLRSEVVAGTPLGLQAKQVMAQGDLVSDAILIGMLESRLSHTDVVKGFILDGYPRNLSQAAALDGLLAKFGHPLNAVVQLEVPTDVLVERIAGRAQAEGREDDTPDAVRKRLQVYNDSTAPVIGFYQQRGILLRVDGVGRLDEVSQRIAVALGC.

10–15 (GSGKGT) is an ATP binding site. Positions 30–59 (STGDLLRSEVVAGTPLGLQAKQVMAQGDLV) are NMP. AMP-binding positions include Thr31, Arg36, 57–59 (DLV), 85–88 (GYPR), and Gln92. The interval 126 to 136 (GRAQAEGREDD) is LID. Arg127 is an ATP binding site. AMP is bound by residues Arg133 and Arg144. Gly172 contacts ATP.

This sequence belongs to the adenylate kinase family. In terms of assembly, monomer.

The protein localises to the cytoplasm. It carries out the reaction AMP + ATP = 2 ADP. The protein operates within purine metabolism; AMP biosynthesis via salvage pathway; AMP from ADP: step 1/1. Functionally, catalyzes the reversible transfer of the terminal phosphate group between ATP and AMP. Plays an important role in cellular energy homeostasis and in adenine nucleotide metabolism. This is Adenylate kinase from Xylella fastidiosa (strain M12).